The following is a 92-amino-acid chain: FMRFamide-like neuropeptides 5 (92 aa).

A propeptide spanning residues 1-41 (MSSRSTTIAFLFIATLLVFQCVSAQSSAEDADYLEKYQRIA) is cleaved from the precursor. Phenylalanine amide is present on residues phenylalanine 51 and phenylalanine 61. Positions 64–82 (SRNTWEDGYASPSVNELYV) are excised as a propeptide. A Phenylalanine amide modification is found at phenylalanine 91.

It belongs to the FARP (FMRFamide related peptide) family. As to expression, each flp gene is expressed in a distinct set of neurons. Flp-5 is expressed in the ASE sensory neurons, the 14 and M4 cholinergic pharyngeal motoneurons, and the PVT and RMG neurons. It is weakly expressed in the PB and 12 neurons. Also expressed in pharyngeal muscle.

The protein resides in the secreted. Functionally, FMRFamides and FMRFamide-like peptides are neuropeptides. GAKFIRF-amide has an excitatory effect on dissected pharyngeal myogenic muscle system. The polypeptide is FMRFamide-like neuropeptides 5 (Caenorhabditis elegans).